The chain runs to 483 residues: Probable cytosol aminopeptidase (483 aa).

Residues lysine 252 and aspartate 257 each coordinate Mn(2+). Lysine 264 is a catalytic residue. Mn(2+) is bound by residues aspartate 275, aspartate 334, and glutamate 336. Arginine 338 is an active-site residue.

Belongs to the peptidase M17 family. Requires Mn(2+) as cofactor.

The protein localises to the cytoplasm. It carries out the reaction Release of an N-terminal amino acid, Xaa-|-Yaa-, in which Xaa is preferably Leu, but may be other amino acids including Pro although not Arg or Lys, and Yaa may be Pro. Amino acid amides and methyl esters are also readily hydrolyzed, but rates on arylamides are exceedingly low.. The enzyme catalyses Release of an N-terminal amino acid, preferentially leucine, but not glutamic or aspartic acids.. In terms of biological role, presumably involved in the processing and regular turnover of intracellular proteins. Catalyzes the removal of unsubstituted N-terminal amino acids from various peptides. The sequence is that of Probable cytosol aminopeptidase from Legionella pneumophila (strain Corby).